The following is a 571-amino-acid chain: WAP, Kazal, immunoglobulin, Kunitz and NTR domain-containing protein 2 (571 aa).

The first 29 residues, methionine 1–alanine 29, serve as a signal peptide directing secretion. The region spanning arginine 34–arginine 87 is the WAP domain. 8 disulfides stabilise this stretch: cysteine 41–cysteine 74, cysteine 57–cysteine 78, cysteine 61–cysteine 73, cysteine 67–cysteine 83, cysteine 129–cysteine 159, cysteine 133–cysteine 152, cysteine 141–cysteine 170, and cysteine 226–cysteine 282. A Kazal-like domain is found at tryptophan 121–tyrosine 172. An Ig-like C2-type domain is found at proline 205 to serine 298. N-linked (GlcNAc...) asparagine glycosylation occurs at asparagine 314. 9 cysteine pairs are disulfide-bonded: cysteine 323-cysteine 373, cysteine 332-cysteine 356, cysteine 348-cysteine 369, cysteine 381-cysteine 431, cysteine 390-cysteine 414, cysteine 406-cysteine 427, cysteine 440-cysteine 510, cysteine 443-cysteine 512, and cysteine 454-cysteine 561. 2 consecutive BPTI/Kunitz inhibitor domains span residues cysteine 323–cysteine 373 and cysteine 381–cysteine 431. Positions cysteine 440 to cysteine 561 constitute an NTR domain. N-linked (GlcNAc...) asparagine glycosylation is present at asparagine 514.

Belongs to the WFIKKN family. As to quaternary structure, interacts with both mature and propeptide myostatin/MSTN. In terms of tissue distribution, widely expressed, with high expression in skeletal muscle and heart. Also expressed in brain, lung and testis. Weakly expressed in liver and kidney.

Its subcellular location is the secreted. Its function is as follows. Protease-inhibitor that contains multiple distinct protease inhibitor domains. Probably has serine protease- and metalloprotease-inhibitor activity. Inhibits the biological activity of mature myostatin, but not activin. The protein is WAP, Kazal, immunoglobulin, Kunitz and NTR domain-containing protein 2 (Wfikkn2) of Mus musculus (Mouse).